Reading from the N-terminus, the 1352-residue chain is Inhibitor of Bruton tyrosine kinase (1352 aa).

2 ANK repeats span residues 51 to 80 (FGRN…DLLV) and 85 to 114 (SGWT…SLYM). RCC1 repeat units follow at residues 141–194 (PTEV…FLSQ), 195–246 (KGQV…VLTD), and 248–301 (GCVY…LWTR). Residues 565–645 (HDVTFQVGNR…MYTDTCDLLT (81 aa)) enclose the BTB 1 domain. Positions 692–716 (AHTLSERQKSKPKSSKKGKGVGDDD) are disordered. Residues 701 to 710 (SKPKSSKKGK) are compositionally biased toward basic residues. The region spanning 769–837 (YDVTMKSVDG…LYTDEAVVIK (69 aa)) is the BTB 2 domain. A disordered region spans residues 976–1002 (FKKAKTRAKKKPRKRSDSSGGYTLSDV). Residues 977 to 989 (KKAKTRAKKKPRK) show a composition bias toward basic residues. S991 bears the Phosphoserine mark. Over residues 993–1002 (SSGGYTLSDV) the composition is skewed to polar residues. 10 positions are modified to phosphoserine: S1005, S1031, S1034, S1040, S1046, S1055, S1084, S1111, S1113, and S1116. Residues 1032-1094 (EGSYAGVASP…PTTKSAPQFI (63 aa)) form a disordered region. Residues 1084-1094 (SPTTKSAPQFI) show a composition bias toward polar residues.

Interacts with the PH domain of BTK.

It localises to the cytoplasm. Its subcellular location is the membrane. Its function is as follows. Acts as an inhibitor of BTK tyrosine kinase activity, thereby playing a role in B-cell development. Down-regulates BTK kinase activity, leading to interference with BTK-mediated calcium mobilization and NF-kappa-B-driven transcription. The polypeptide is Inhibitor of Bruton tyrosine kinase (Ibtk) (Mus musculus (Mouse)).